A 206-amino-acid polypeptide reads, in one-letter code: Small ribosomal subunit protein uS4 (206 aa).

The 62-residue stretch at 96–157 (SRLDNVVYRM…KAKNQARIQN (62 aa)) folds into the S4 RNA-binding domain.

The protein belongs to the universal ribosomal protein uS4 family. As to quaternary structure, part of the 30S ribosomal subunit. Contacts protein S5. The interaction surface between S4 and S5 is involved in control of translational fidelity.

In terms of biological role, one of the primary rRNA binding proteins, it binds directly to 16S rRNA where it nucleates assembly of the body of the 30S subunit. Its function is as follows. With S5 and S12 plays an important role in translational accuracy. This is Small ribosomal subunit protein uS4 from Chromohalobacter salexigens (strain ATCC BAA-138 / DSM 3043 / CIP 106854 / NCIMB 13768 / 1H11).